A 398-amino-acid polypeptide reads, in one-letter code: Elongation factor Tu (398 aa).

Positions 10–207 constitute a tr-type G domain; the sequence is KPHVNIGTIG…TVDEYIPEPE (198 aa). The segment at 19–26 is G1; the sequence is GHVDHGKT. 19–26 lines the GTP pocket; the sequence is GHVDHGKT. Thr26 is a binding site for Mg(2+). Positions 63–67 are G2; the sequence is GITIN. Residues 84–87 form a G3 region; the sequence is DAPG. GTP is bound by residues 84 to 88 and 139 to 142; these read DAPGH and NKVD. The interval 139–142 is G4; the sequence is NKVD. The tract at residues 177–179 is G5; that stretch reads SAL.

Belongs to the TRAFAC class translation factor GTPase superfamily. Classic translation factor GTPase family. EF-Tu/EF-1A subfamily. In terms of assembly, monomer.

The protein resides in the cytoplasm. It catalyses the reaction GTP + H2O = GDP + phosphate + H(+). Its function is as follows. GTP hydrolase that promotes the GTP-dependent binding of aminoacyl-tRNA to the A-site of ribosomes during protein biosynthesis. This chain is Elongation factor Tu, found in Streptococcus agalactiae serotype Ia (strain ATCC 27591 / A909 / CDC SS700).